The primary structure comprises 399 residues: Odorant receptor 42b (399 aa).

Residues Met-1–Tyr-45 lie on the Cytoplasmic side of the membrane. A helical membrane pass occupies residues Leu-46–Gly-66. Residues Ser-67 to Ser-83 are Extracellular-facing. The helical transmembrane segment at Leu-84 to Leu-104 threads the bilayer. At Trp-105–Ala-140 the chain is on the cytoplasmic side. A helical transmembrane segment spans residues Phe-141–Leu-161. The Extracellular portion of the chain corresponds to Ser-162–Asp-178. Residues Gly-179 to Leu-199 traverse the membrane as a helical segment. The Cytoplasmic portion of the chain corresponds to Gln-200–Thr-268. The helical transmembrane segment at Ile-269 to Phe-289 threads the bilayer. The Extracellular portion of the chain corresponds to Phe-290–Asp-292. The chain crosses the membrane as a helical span at residues Ile-293 to Phe-313. The Cytoplasmic segment spans residues Cys-314–Gln-356. The helical transmembrane segment at Pro-357–Ala-377 threads the bilayer. The Extracellular portion of the chain corresponds to Lys-378 to Asp-399.

It belongs to the insect chemoreceptor superfamily. Heteromeric odorant receptor channel (TC 1.A.69) family. Or2a subfamily. As to quaternary structure, interacts with Orco. Complexes exist early in the endomembrane system in olfactory sensory neurons (OSNs), coupling these complexes to the conserved ciliary trafficking pathway. In terms of tissue distribution, expressed in olfactory sensory neurons in the antenna.

The protein localises to the cell membrane. Functionally, odorant receptor which mediates acceptance or avoidance behavior, depending on its substrates. The odorant receptor repertoire encodes a large collection of odor stimuli that vary widely in identity, intensity, and duration. May form a complex with Orco to form odorant-sensing units, providing sensitive and prolonged odorant signaling and calcium permeability. Involved in the behavioral responses to ethyl acetate and pentyl acetate. The sequence is that of Odorant receptor 42b (Or42b) from Drosophila melanogaster (Fruit fly).